Here is a 189-residue protein sequence, read N- to C-terminus: Cancer/testis antigen family 45 member A5 (189 aa).

A compositionally biased stretch (basic and acidic residues) spans 1–23; sequence MTDKTEKVAVDPETVFKRPRECD. Disordered stretches follow at residues 1–27 and 82–118; these read MTDK…SPSY and DGMM…SPKS.

The protein belongs to the CT45 family. As to expression, testis specific. Expressed in cancer cell lines.

The protein resides in the nucleus. The chain is Cancer/testis antigen family 45 member A5 from Homo sapiens (Human).